The primary structure comprises 539 residues: Nucleoporin NUP60 (539 aa).

Residues Ser-10, Ser-49, Ser-81, and Ser-89 each carry the phosphoserine modification. The disordered stretch occupies residues Asp-44–Ile-80. Positions Val-91–Ser-118 form a coiled coil. A phosphoserine mark is found at Ser-162, Ser-171, Ser-214, and Ser-222. Polar residues-rich tracts occupy residues Thr-242–Ser-252 and Ser-258–Lys-267. Disordered stretches follow at residues Thr-242–Lys-267, Ile-305–Lys-329, and Asn-347–Ile-493. Residues Asn-347–Asp-359 show a composition bias toward polar residues. Phosphoserine occurs at positions 352, 360, 374, and 382. Composition is skewed to polar residues over residues Ser-395–Gln-433 and Gly-448–Glu-485. FXF repeat units lie at residues Phe-399–Phe-401 and Phe-427–Phe-429. Thr-460 is modified (phosphothreonine). An FXF 3 repeat occupies Phe-469–Phe-471. A phosphoserine mark is found at Ser-480 and Ser-483. An FXF 4 repeat occupies Phe-509 to Phe-511.

In terms of assembly, component of the nuclear pore complex (NPC). NPC constitutes the exclusive means of nucleocytoplasmic transport. NPCs allow the passive diffusion of ions and small molecules and the active, nuclear transport receptor-mediated bidirectional transport of macromolecules such as proteins, RNAs, ribonucleoparticles (RNPs), and ribosomal subunits across the nuclear envelope. Due to its 8-fold rotational symmetry, all subunits are present with 8 copies or multiples thereof. Binds to NUP1 and NUP2 forming the nuclear basket and the distal ring. The interaction with NUP2 is GSP1-GTP-dependent. Interacts through its FG repeats with karyopherins, such as KAP123 and KAP95-SRP1 (KAP60). Also interacts with GSP1-GTP and SRM1 (PRP20), where NUP60 reduces SRM1 activity, thus inhibiting GSP1 guanine nucleotide dissociation. In terms of processing, phosphorylated by CDC28.

It is found in the nucleus. It localises to the nuclear pore complex. The protein resides in the nucleus membrane. In terms of biological role, functions as a component of the nuclear pore complex (NPC). NPC components, collectively referred to as nucleoporins (NUPs), can play the role of both NPC structural components and of docking or interaction partners for transiently associated nuclear transport factors. Active directional transport is assured by both, a Phe-Gly (FG) repeat affinity gradient for these transport factors across the NPC and a transport cofactor concentration gradient across the nuclear envelope (GSP1 and GSP2 GTPases associated predominantly with GTP in the nucleus, with GDP in the cytoplasm). The protein is Nucleoporin NUP60 (NUP60) of Saccharomyces cerevisiae (strain ATCC 204508 / S288c) (Baker's yeast).